The chain runs to 145 residues: Superoxide dismutase [Mn/Fe] (145 aa).

Fe(3+)-binding residues include H10 and H64. The Mn(2+) site is built by H10 and H64.

It belongs to the iron/manganese superoxide dismutase family. Requires Mn(2+) as cofactor. Fe(3+) serves as cofactor.

The enzyme catalyses 2 superoxide + 2 H(+) = H2O2 + O2. Destroys superoxide anion radicals which are normally produced within the cells and which are toxic to biological systems. Catalyzes the dismutation of superoxide anion radicals into O2 and H2O2 by successive reduction and oxidation of the transition metal ion at the active site. The sequence is that of Superoxide dismutase [Mn/Fe] (sodA) from Streptococcus alactolyticus.